The chain runs to 234 residues: Redox-sensing transcriptional repressor Rex (234 aa).

Positions 17-56 form a DNA-binding region, H-T-H motif; that stretch reads TYIRVLEELEAQNVLRASSGELARRAGVTPFQVRKDLTYF. 91–96 is a binding site for NAD(+); the sequence is GMGRLG.

It belongs to the transcriptional regulatory Rex family. In terms of assembly, homodimer.

The protein localises to the cytoplasm. In terms of biological role, modulates transcription in response to changes in cellular NADH/NAD(+) redox state. This is Redox-sensing transcriptional repressor Rex from Deinococcus radiodurans (strain ATCC 13939 / DSM 20539 / JCM 16871 / CCUG 27074 / LMG 4051 / NBRC 15346 / NCIMB 9279 / VKM B-1422 / R1).